We begin with the raw amino-acid sequence, 125 residues long: Larval cuticle protein LCP-14 (125 aa).

The N-terminal stretch at 1–16 (MKSFIVALCVVGCVLA) is a signal peptide. Positions 33–102 (EGSYNYAFES…PQADFLPTPP (70 aa)) constitute a Chitin-binding type R&amp;R domain.

Its function is as follows. Component of the cuticle of the larva of tobacco hornworm. In Manduca sexta (Tobacco hawkmoth), this protein is Larval cuticle protein LCP-14 (LCP-14).